The chain runs to 175 residues: Zinc finger protein ZAT18 (175 aa).

2 C2H2-type zinc fingers span residues 49 to 71 (FECK…RASH) and 93 to 115 (HKCT…MRKH). The short motif at 71-78 (HKKPKLIV) is the Nuclear localization signal element. An EAR-like (transcriptional repression) motif is present at residues 146-152 (LDLNLTP).

As to expression, mostly expressed in stems, siliques and leaves, and, to a lower extent, in cotyledons, hypocotyls and roots.

It is found in the nucleus. Transcription factor involved in stress responses. Positive regulator of the jasmonic acid (JA)- mediated signaling pathway. Triggers the up-regulation of LOX3, VSP2, PAL1 and PAL2 in a JA-dependent manner. Promotes drought and osmotic stress tolerance by preventing reactive oxygen species (ROS) production (e.g. H(2)O(2)). This Arabidopsis thaliana (Mouse-ear cress) protein is Zinc finger protein ZAT18.